Consider the following 558-residue polypeptide: Dimethylaniline monooxygenase [N-oxide-forming] 4 (558 aa).

FAD is bound by residues 9 to 13, Glu-32, and 40 to 41; these read GAGVS and LW. Residues 60-61 and 195-198 each bind NADP(+); these read TN and TGGD. The chain crosses the membrane as a helical span at residues 517-537; the sequence is AWGAPVLLASLLLICKSSLFL.

It belongs to the FMO family. FAD is required as a cofactor. Liver.

It is found in the microsome membrane. The protein resides in the endoplasmic reticulum membrane. The enzyme catalyses N,N-dimethylaniline + NADPH + O2 + H(+) = N,N-dimethylaniline N-oxide + NADP(+) + H2O. Its function is as follows. This protein is involved in the oxidative metabolism of a variety of xenobiotics such as drugs and pesticides. This chain is Dimethylaniline monooxygenase [N-oxide-forming] 4 (FMO4), found in Homo sapiens (Human).